A 477-amino-acid polypeptide reads, in one-letter code: Glutamyl-tRNA(Gln) amidotransferase subunit A (477 aa).

Catalysis depends on charge relay system residues lysine 76 and serine 151. The active-site Acyl-ester intermediate is serine 175.

Belongs to the amidase family. GatA subfamily. In terms of assembly, heterotrimer of A, B and C subunits.

It catalyses the reaction L-glutamyl-tRNA(Gln) + L-glutamine + ATP + H2O = L-glutaminyl-tRNA(Gln) + L-glutamate + ADP + phosphate + H(+). Its function is as follows. Allows the formation of correctly charged Gln-tRNA(Gln) through the transamidation of misacylated Glu-tRNA(Gln) in organisms which lack glutaminyl-tRNA synthetase. The reaction takes place in the presence of glutamine and ATP through an activated gamma-phospho-Glu-tRNA(Gln). The protein is Glutamyl-tRNA(Gln) amidotransferase subunit A of Chlorobium phaeobacteroides (strain BS1).